Consider the following 237-residue polypeptide: Class B acid phosphatase (237 aa).

Positions 1 to 25 (MRKVSLALSAACLLFTLNYTASALA) are cleaved as a signal peptide. The active-site Nucleophile is D69. Residues D69 and D71 each coordinate Mg(2+). The active-site Proton donor is the D71. Residues 137-138 (TG) and K177 each bind substrate. Residue D192 participates in Mg(2+) binding.

It belongs to the class B bacterial acid phosphatase family. Homotetramer. Requires Mg(2+) as cofactor.

It is found in the periplasm. The enzyme catalyses a phosphate monoester + H2O = an alcohol + phosphate. In terms of biological role, dephosphorylates several organic phosphate monoesters. Also has a phosphotransferase activity catalyzing the transfer of low-energy phosphate groups from organic phosphate monoesters to free hydroxyl groups of various organic compounds. This chain is Class B acid phosphatase, found in Citrobacter rodentium (strain ICC168) (Citrobacter freundii biotype 4280).